A 235-amino-acid polypeptide reads, in one-letter code: Vacuolar protein sorting-associated protein 60.1 (235 aa).

Residues 1-29 (MRRVFGAKKNTEPPPSIQDASDRINKRGD) are disordered. Positions 20-29 (ASDRINKRGD) are enriched in basic and acidic residues. Residues 99–148 (LKDAQQTMTALKSANKELKGMMKTVKIQDIDNLQDEMMDLMDVSSEIQES) adopt a coiled-coil conformation. Residues 175–235 (MGNETEADGM…PAVPRASLRG (61 aa)) form a disordered region.

The protein belongs to the SNF7 family. In terms of assembly, interacts with SKD1/VPS4 and LIP5. Interacts with VPS2.2.

It localises to the endosome. The protein resides in the multivesicular body membrane. Probable peripherally associated component of the endosomal sorting required for transport complex III (ESCRT-III) which is involved in multivesicular bodies (MVBs) formation and sorting of endosomal cargo proteins into MVBs. The polypeptide is Vacuolar protein sorting-associated protein 60.1 (Arabidopsis thaliana (Mouse-ear cress)).